The sequence spans 254 residues: Triosephosphate isomerase (254 aa).

10–12 (NWK) serves as a coordination point for substrate. The active-site Electrophile is histidine 96. The Proton acceptor role is filled by glutamate 168. Substrate-binding positions include glycine 174, serine 214, and 235 to 236 (GG).

Belongs to the triosephosphate isomerase family. As to quaternary structure, homodimer.

Its subcellular location is the cytoplasm. The enzyme catalyses D-glyceraldehyde 3-phosphate = dihydroxyacetone phosphate. It functions in the pathway carbohydrate biosynthesis; gluconeogenesis. It participates in carbohydrate degradation; glycolysis; D-glyceraldehyde 3-phosphate from glycerone phosphate: step 1/1. Involved in the gluconeogenesis. Catalyzes stereospecifically the conversion of dihydroxyacetone phosphate (DHAP) to D-glyceraldehyde-3-phosphate (G3P). This Rhodopirellula baltica (strain DSM 10527 / NCIMB 13988 / SH1) protein is Triosephosphate isomerase.